Reading from the N-terminus, the 479-residue chain is MGIKGLTKFIADTAPNAIKEIKIENLMGRVVAIDASMSLYQFIIAIRDGDQYGNLMNEAGETTSHISGLMSRTIKLMENGLKPIYVFDGAPPELKGSELEKRGEKRQKAEELLLKAKEEGNLEEIKKQSGRTVRVTKKQNEEAKKLLTLMGIPVIESPCEAEAQCAFLTKYDMAHATATEDADALVFGTKILIRNLNANASSNKNKNKNSSKRGYILTEINLEQVLKGLKLTMDEFIDFCILCGCDYCDTIKGIGSKTAYNLIKEYNCIENIIKNIDQNKYQVPDNFKYVEARQSFINPKVLEKSEVKIDWCEPKIEELKTFLIKEHNFNEVRVTNYITRLLKARKVTTQRRLDTFFTTCTKKSTKLIIEESQKELLKAKGKGKKRELNDNSTKLNAKKKKTNIKDEKKNTDKMDELKNKSDENFVKDEENDQDDYDQNLFDEKTNSDSGNIKNENIKEDISSNDITMDIPKCTNDIVC.

The N-domain stretch occupies residues 1–106 (MGIKGLTKFI…SELEKRGEKR (106 aa)). D34 contacts Mg(2+). The DNA site is built by R47 and R72. Mg(2+)-binding residues include D88, E160, E162, D181, and D183. Positions 124-266 (EIKKQSGRTV…KTAYNLIKEY (143 aa)) are I-domain. E160 is a binding site for DNA. DNA-binding residues include G244 and D246. D246 contributes to the Mg(2+) binding site. Positions 349-357 (TQRRLDTFF) are interaction with PCNA. Positions 379 to 455 (AKGKGKKREL…NSDSGNIKNE (77 aa)) are disordered. Residues 403–428 (NIKDEKKNTDKMDELKNKSDENFVKD) show a composition bias toward basic and acidic residues.

It belongs to the XPG/RAD2 endonuclease family. FEN1 subfamily. In terms of assembly, interacts with PCNA. Three molecules of FEN1 bind to one PCNA trimer with each molecule binding to one PCNA monomer. PCNA stimulates the nuclease activity without altering cleavage specificity. Mg(2+) serves as cofactor. In terms of processing, phosphorylated. Phosphorylation upon DNA damage induces relocalization to the nuclear plasma.

Its subcellular location is the nucleus. It is found in the nucleolus. It localises to the nucleoplasm. The protein resides in the mitochondrion. Its function is as follows. Structure-specific nuclease with 5'-flap endonuclease and 5'-3' exonuclease activities involved in DNA replication and repair. During DNA replication, cleaves the 5'-overhanging flap structure that is generated by displacement synthesis when DNA polymerase encounters the 5'-end of a downstream Okazaki fragment. It enters the flap from the 5'-end and then tracks to cleave the flap base, leaving a nick for ligation. Also involved in the long patch base excision repair (LP-BER) pathway, by cleaving within the apurinic/apyrimidinic (AP) site-terminated flap. Acts as a genome stabilization factor that prevents flaps from equilibrating into structures that lead to duplications and deletions. Also possesses 5'-3' exonuclease activity on nicked or gapped double-stranded DNA, and exhibits RNase H activity. Also involved in replication and repair of rDNA and in repairing mitochondrial DNA. In Plasmodium chabaudi chabaudi, this protein is Flap endonuclease 1.